The following is a 236-amino-acid chain: Purine nucleoside phosphorylase DeoD-type (236 aa).

His-4 serves as a coordination point for a purine D-ribonucleoside. Residues Gly-20, Arg-24, Arg-43, and 87–90 contribute to the phosphate site; that span reads RVGT. Residues 179–181 and 203–204 each bind a purine D-ribonucleoside; these read EME and SD. Asp-204 functions as the Proton donor in the catalytic mechanism.

It belongs to the PNP/UDP phosphorylase family. In terms of assembly, homohexamer; trimer of homodimers.

The enzyme catalyses a purine D-ribonucleoside + phosphate = a purine nucleobase + alpha-D-ribose 1-phosphate. It catalyses the reaction a purine 2'-deoxy-D-ribonucleoside + phosphate = a purine nucleobase + 2-deoxy-alpha-D-ribose 1-phosphate. Catalyzes the reversible phosphorolytic breakdown of the N-glycosidic bond in the beta-(deoxy)ribonucleoside molecules, with the formation of the corresponding free purine bases and pentose-1-phosphate. In Streptococcus pneumoniae (strain CGSP14), this protein is Purine nucleoside phosphorylase DeoD-type.